The following is a 483-amino-acid chain: MGGQSSKIGTCCSHKTTALEAPDVENKENGEVNGVHSFREYSLEQLKIATSCFALENVVSEHGETAPNVVYQGKLENHMKIAIKRFSGTAWPDPRQFLEEARLVGQLRSKRMANLLGYCCEGGERLLVAEFMPNETLAKHLFHWDTEPMKWAMRLRVALYISEALEYCSNNGHTLYHDLNAYRVLFDEECNPRLSTFGLMKNSRDGKSYSTNLAFTPPEYLRTGRITAESVIYSFGTLLLDLLTGKHIPPSHALDLIRDRNLQTLTDSCLEGQFSDSDGTELVRLTSCCLQYEARERPNIKSLVTALISLQKDTEVLSHVLMGLPQSGTFASPPSPFAEACSGKDLTSMVEILEKIGYKDDEDLSFMWTEQMQEAINSKKKGDIAFRRKDFSEAIEFYTQFLDLGMISATVLVRRSQSYLMSNMAKEALDDAMKAQGISPVWYVALYLQSAALSVLGMEKESQIALTEGSILEARKISASTQN.

The N-myristoyl glycine moiety is linked to residue Gly-2. The region spanning 56–322 is the Protein kinase domain; that stretch reads ENVVSEHGET…DTEVLSHVLM (267 aa). Residues 62 to 70 and Lys-84 contribute to the ATP site; that span reads HGETAPNVV. The Proton acceptor role is filled by Asp-178.

It belongs to the protein kinase superfamily. Ser/Thr protein kinase family.

It is found in the cell membrane. The enzyme catalyses L-seryl-[protein] + ATP = O-phospho-L-seryl-[protein] + ADP + H(+). The catalysed reaction is L-threonyl-[protein] + ATP = O-phospho-L-threonyl-[protein] + ADP + H(+). In terms of biological role, probable serine/threonine kinase that acts as a positive regulator of brassinosteroid (BR) signaling downstream of the receptor kinase BRI1. Functions redundantly with BSK3, BSK6, BSK7 and BSK8. In Arabidopsis thaliana (Mouse-ear cress), this protein is Serine/threonine-protein kinase BSK4.